The following is a 151-amino-acid chain: 3-hydroxyacyl-[acyl-carrier-protein] dehydratase FabZ (151 aa).

His-54 is an active-site residue.

This sequence belongs to the thioester dehydratase family. FabZ subfamily.

It localises to the cytoplasm. It carries out the reaction a (3R)-hydroxyacyl-[ACP] = a (2E)-enoyl-[ACP] + H2O. Involved in unsaturated fatty acids biosynthesis. Catalyzes the dehydration of short chain beta-hydroxyacyl-ACPs and long chain saturated and unsaturated beta-hydroxyacyl-ACPs. In Buchnera aphidicola subsp. Acyrthosiphon pisum (strain 5A), this protein is 3-hydroxyacyl-[acyl-carrier-protein] dehydratase FabZ.